We begin with the raw amino-acid sequence, 1052 residues long: Protein argonaute 14 (1052 aa).

A compositionally biased stretch (gly residues) spans 1-39 (MASRGGDGLVGGGRGPLGGRDGRGRGPAGGRGGGRGGGH). Disordered regions lie at residues 1 to 127 (MASR…TPAV) and 170 to 194 (GGRPAPPAAPPAPIPVSSKGVAPPS). Residues 40–49 (PQQQQQQQPG) show a composition bias toward low complexity. Composition is skewed to gly residues over residues 50–59 (YGRGDGGGRG) and 66–81 (GVVGRGTGGGGGGGRG). Over residues 97–117 (VRPAMAAAPAASTPGPVAVAA) the composition is skewed to low complexity. A compositionally biased stretch (pro residues) spans 173-183 (PAPPAAPPAPI). Residues 394 to 510 (SVVEYVKNCL…LPMEVCTIVE (117 aa)) form the PAZ domain. A Piwi domain is found at 677–1009 (LLIVILPDVN…AAFRARYYDE (333 aa)).

Belongs to the argonaute family. Ago subfamily. As to expression, expressed in seeds.

Probably involved in the RNA silencing pathway. May bind to short RNAs such as microRNAs (miRNAs) or short interfering RNAs (siRNAs), and represses the translation of mRNAs which are complementary to them. This chain is Protein argonaute 14 (AGO14), found in Oryza sativa subsp. japonica (Rice).